Reading from the N-terminus, the 892-residue chain is Transposase for transposon Tn4556 (892 aa).

The segment covering 1–12 (MGGRAGLDDGRG) has biased composition (basic and acidic residues). A disordered region spans residues 1–63 (MGGRAGLDDG…GQPARDAEHR (63 aa)). The segment covering 23-34 (VAEGAAGAAAWG) has biased composition (low complexity).

The protein belongs to the transposase 7 family.

Required for transposition of transposon Tn4556. In Streptomyces fradiae (Streptomyces roseoflavus), this protein is Transposase for transposon Tn4556 (tnpA).